Here is a 371-residue protein sequence, read N- to C-terminus: Probable dual-specificity RNA methyltransferase RlmN (371 aa).

Glutamate 114 serves as the catalytic Proton acceptor. In terms of domain architecture, Radical SAM core spans 120 to 346 (DGPRRSICVS…ESAGVNVNFR (227 aa)). Residues cysteine 127 and cysteine 357 are joined by a disulfide bond. [4Fe-4S] cluster contacts are provided by cysteine 134, cysteine 138, and cysteine 141. S-adenosyl-L-methionine contacts are provided by residues 183 to 184 (GE), serine 215, 238 to 240 (SLH), and asparagine 314. Catalysis depends on cysteine 357, which acts as the S-methylcysteine intermediate.

Belongs to the radical SAM superfamily. RlmN family. [4Fe-4S] cluster is required as a cofactor.

The protein resides in the cytoplasm. The catalysed reaction is adenosine(2503) in 23S rRNA + 2 reduced [2Fe-2S]-[ferredoxin] + 2 S-adenosyl-L-methionine = 2-methyladenosine(2503) in 23S rRNA + 5'-deoxyadenosine + L-methionine + 2 oxidized [2Fe-2S]-[ferredoxin] + S-adenosyl-L-homocysteine. It carries out the reaction adenosine(37) in tRNA + 2 reduced [2Fe-2S]-[ferredoxin] + 2 S-adenosyl-L-methionine = 2-methyladenosine(37) in tRNA + 5'-deoxyadenosine + L-methionine + 2 oxidized [2Fe-2S]-[ferredoxin] + S-adenosyl-L-homocysteine. Its function is as follows. Specifically methylates position 2 of adenine 2503 in 23S rRNA and position 2 of adenine 37 in tRNAs. The sequence is that of Probable dual-specificity RNA methyltransferase RlmN from Rhodopirellula baltica (strain DSM 10527 / NCIMB 13988 / SH1).